The primary structure comprises 454 residues: MARPNKFLLWFCCFAWLCFPISLGSQASGGEAQIAASAELESGAMPWSLLQHIDERDRAGLLPALFKVLSVGRGGSPRLQPDSRALHYMKKLYKTYATKEGIPKSNRSHLYNTVRLFTPCTRHKQAPGDQVTGILPSVELLFNLDRITTVEHLLKSVLLYNINNSVSFSSAVKCVCNLMIKEPKSSSRTLGRAPYSFTFNSQFEFGKKHKWIQIDVTSLLQPLVASNKRSIHMSINFTCMKDQLEHPSAQNGLFNMTLVSPSLILYLNDTSAQAYHSWYSLHYKRRPSQGPDQERSLSAYPVGEEAAEDGRSSHHRHRRGQETVSSELKKPLGPASFNLSEYFRQFLLPQNECELHDFRLSFSQLKWDNWIVAPHRYNPRYCKGDCPRAVGHRYGSPVHTMVQNIIYEKLDSSVPRPSCVPAKYSPLSVLTIEPDGSIAYKEYEDMIATKCTCR.

The N-terminal stretch at 1 to 24 (MARPNKFLLWFCCFAWLCFPISLG) is a signal peptide. Residues 25–319 (SQASGGEAQI…GRSSHHRHRR (295 aa)) constitute a propeptide that is removed on maturation. N-linked (GlcNAc...) asparagine glycosylation is found at Asn106, Asn163, Asn236, Asn255, and Asn268. The interval 303 to 330 (GEEAAEDGRSSHHRHRRGQETVSSELKK) is disordered. The residue at position 325 (Ser325) is a Phosphoserine; by CK. An N-linked (GlcNAc...) asparagine glycan is attached at Asn338. 3 disulfide bridges follow: Cys353–Cys419, Cys382–Cys451, and Cys386–Cys453.

It belongs to the TGF-beta family. As to quaternary structure, homodimer or heterodimer (Potential). But, in contrast to other members of this family, cannot be disulfide-linked. In terms of processing, phosphorylated; phosphorylation is critical for GDF9 function. In vitro, can be phosphorylated by CK at Ser-325. In terms of tissue distribution, expressed in ovarian granulosa cells. Present in oocytes of primary follicles (at protein level).

Its subcellular location is the secreted. Its function is as follows. Required for ovarian folliculogenesis. Promotes primordial follicle development. Stimulates granulosa cell proliferation. Promotes cell transition from G0/G1 to S and G2/M phases, through an increase of CCND1 and CCNE1 expression, and RB1 phosphorylation. It regulates STAR expression and cAMP-dependent progesterone release in granulosa and thecal cells. Attenuates the suppressive effects of activin A on STAR expression and progesterone production by increasing the expression of inhibin B. It suppresses FST and FSTL3 production in granulosa-lutein cells. In Homo sapiens (Human), this protein is Growth/differentiation factor 9 (GDF9).